The primary structure comprises 329 residues: Glutamyl-Q tRNA(Asp) synthetase (329 aa).

L-glutamate contacts are provided by residues 8–12 and glutamate 44; that span reads RLAPS. Positions 11–21 match the 'HIGH' region motif; sequence PSPTGAQHLGN. Zn(2+)-binding residues include cysteine 100, cysteine 102, tyrosine 129, and cysteine 133. L-glutamate is bound by residues tyrosine 196 and arginine 214. Positions 252-256 match the 'KMSKS' region motif; it reads RLAKR. ATP is bound at residue lysine 255.

Belongs to the class-I aminoacyl-tRNA synthetase family. GluQ subfamily. It depends on Zn(2+) as a cofactor.

Its function is as follows. Catalyzes the tRNA-independent activation of glutamate in presence of ATP and the subsequent transfer of glutamate onto a tRNA(Asp). Glutamate is transferred on the 2-amino-5-(4,5-dihydroxy-2-cyclopenten-1-yl) moiety of the queuosine in the wobble position of the QUC anticodon. The sequence is that of Glutamyl-Q tRNA(Asp) synthetase from Rhodopirellula baltica (strain DSM 10527 / NCIMB 13988 / SH1).